A 148-amino-acid polypeptide reads, in one-letter code: uncharacterized protein (148 aa).

An N-acetyltransferase domain is found at 1-144 (MNIKRITTEA…PHVLMTKEIS (144 aa)).

This is an uncharacterized protein from Bacillus subtilis (strain 168).